Reading from the N-terminus, the 238-residue chain is 3-deoxy-manno-octulosonate cytidylyltransferase (238 aa).

It belongs to the KdsB family.

The protein resides in the cytoplasm. It catalyses the reaction 3-deoxy-alpha-D-manno-oct-2-ulosonate + CTP = CMP-3-deoxy-beta-D-manno-octulosonate + diphosphate. It functions in the pathway nucleotide-sugar biosynthesis; CMP-3-deoxy-D-manno-octulosonate biosynthesis; CMP-3-deoxy-D-manno-octulosonate from 3-deoxy-D-manno-octulosonate and CTP: step 1/1. It participates in bacterial outer membrane biogenesis; lipopolysaccharide biosynthesis. In terms of biological role, activates KDO (a required 8-carbon sugar) for incorporation into bacterial lipopolysaccharide in Gram-negative bacteria. In Nitratiruptor sp. (strain SB155-2), this protein is 3-deoxy-manno-octulosonate cytidylyltransferase.